Consider the following 484-residue polypeptide: tRNA sulfurtransferase (484 aa).

Positions 56 to 158 (NCLKKALSKV…GNRAYFYTEV (103 aa)) constitute a THUMP domain. ATP-binding positions include 176–177 (LV), K257, G279, and Q288. C336 and C444 are disulfide-bonded. A Rhodanese domain is found at 396 to 479 (APEGAVIVDL…TRNAVPPSSQ (84 aa)). The Cysteine persulfide intermediate role is filled by C444.

This sequence belongs to the ThiI family.

It localises to the cytoplasm. It catalyses the reaction [ThiI sulfur-carrier protein]-S-sulfanyl-L-cysteine + a uridine in tRNA + 2 reduced [2Fe-2S]-[ferredoxin] + ATP + H(+) = [ThiI sulfur-carrier protein]-L-cysteine + a 4-thiouridine in tRNA + 2 oxidized [2Fe-2S]-[ferredoxin] + AMP + diphosphate. The catalysed reaction is [ThiS sulfur-carrier protein]-C-terminal Gly-Gly-AMP + S-sulfanyl-L-cysteinyl-[cysteine desulfurase] + AH2 = [ThiS sulfur-carrier protein]-C-terminal-Gly-aminoethanethioate + L-cysteinyl-[cysteine desulfurase] + A + AMP + 2 H(+). Its pathway is cofactor biosynthesis; thiamine diphosphate biosynthesis. In terms of biological role, catalyzes the ATP-dependent transfer of a sulfur to tRNA to produce 4-thiouridine in position 8 of tRNAs, which functions as a near-UV photosensor. Also catalyzes the transfer of sulfur to the sulfur carrier protein ThiS, forming ThiS-thiocarboxylate. This is a step in the synthesis of thiazole, in the thiamine biosynthesis pathway. The sulfur is donated as persulfide by IscS. In Pyrobaculum aerophilum (strain ATCC 51768 / DSM 7523 / JCM 9630 / CIP 104966 / NBRC 100827 / IM2), this protein is tRNA sulfurtransferase.